We begin with the raw amino-acid sequence, 209 residues long: MEQQKIPQATAKRLPLYYRFIQNLSLSGKQRVSSAELSEAVKVDSATIRRDFSYFGALGKKGYGYNVNYLLSFFRETLDQDDITRVALIGVGNLGTAFLHYNFTKNNNTKIEMAFDVSEEKVGTEIGGIPVYHLDELEERLSNDIQVAILTVPATVAQSVADRLAETNVHGILNFTPARLNVSENIRIHHIDLAVELQTLVYFLKNYPQ.

The H-T-H motif DNA-binding region spans 16-55 (LYYRFIQNLSLSGKQRVSSAELSEAVKVDSATIRRDFSYF). An NAD(+)-binding site is contributed by 90-95 (GVGNLG).

It belongs to the transcriptional regulatory Rex family. In terms of assembly, homodimer.

The protein localises to the cytoplasm. Modulates transcription in response to changes in cellular NADH/NAD(+) redox state. The protein is Redox-sensing transcriptional repressor Rex of Bacillus cereus (strain AH187).